Consider the following 712-residue polypeptide: Polyribonucleotide nucleotidyltransferase (712 aa).

Positions 487 and 493 each coordinate Mg(2+). The 60-residue stretch at 554–613 (PKIITMTINPDKIRDVIGPSGKQINKIIEETGVKIDIEQDGTVFISSINQEMNDKAKKII) folds into the KH domain. Positions 623–691 (GEIYEGKVKR…KQGRVNLSRK (69 aa)) constitute an S1 motif domain.

This sequence belongs to the polyribonucleotide nucleotidyltransferase family. Mg(2+) serves as cofactor.

Its subcellular location is the cytoplasm. It carries out the reaction RNA(n+1) + phosphate = RNA(n) + a ribonucleoside 5'-diphosphate. Involved in mRNA degradation. Catalyzes the phosphorolysis of single-stranded polyribonucleotides processively in the 3'- to 5'-direction. This chain is Polyribonucleotide nucleotidyltransferase, found in Bacillus cereus (strain G9842).